A 142-amino-acid polypeptide reads, in one-letter code: Transcriptional regulator MraZ (142 aa).

SpoVT-AbrB domains are found at residues 5-47 and 76-119; these read EYQH…PLDE and ACEV…SKEK.

Belongs to the MraZ family. In terms of assembly, forms oligomers.

The protein localises to the cytoplasm. The protein resides in the nucleoid. The protein is Transcriptional regulator MraZ of Clostridium beijerinckii (strain ATCC 51743 / NCIMB 8052) (Clostridium acetobutylicum).